We begin with the raw amino-acid sequence, 272 residues long: Eukaryotic translation initiation factor 3 subunit G (272 aa).

2 disordered regions span residues 1–28 (MPALDEIKSSWADEVELDSGSLPPPTEI) and 143–187 (AGKA…RGRD). Positions 190–268 (TAIRISNLSE…LILNVEWSKP (79 aa)) constitute an RRM domain.

The protein belongs to the eIF-3 subunit G family. Component of the eukaryotic translation initiation factor 3 (eIF-3) complex.

Its subcellular location is the cytoplasm. Functionally, RNA-binding component of the eukaryotic translation initiation factor 3 (eIF-3) complex, which is involved in protein synthesis of a specialized repertoire of mRNAs and, together with other initiation factors, stimulates binding of mRNA and methionyl-tRNAi to the 40S ribosome. The eIF-3 complex specifically targets and initiates translation of a subset of mRNAs involved in cell proliferation. This subunit can bind 18S rRNA. The polypeptide is Eukaryotic translation initiation factor 3 subunit G (Culex quinquefasciatus (Southern house mosquito)).